A 244-amino-acid chain; its full sequence is Tyrosine recombinase XerD-like (244 aa).

Residues 1-73 (MRDRISAFLE…ACNQFLYFLY (73 aa)) form the Core-binding (CB) domain. One can recognise a Tyr recombinase domain in the interval 90-244 (AEKKTEKPEI…KTVLTLEKYR (155 aa)). Active-site residues include Lys150 and Arg211. Tyr243 acts as the O-(3'-phospho-DNA)-tyrosine intermediate in catalysis.

It belongs to the 'phage' integrase family. XerD-like subfamily.

Its subcellular location is the cytoplasm. Putative tyrosine recombinase. Not involved in the cutting and rejoining of the recombining DNA molecules on dif(SL) site. This is Tyrosine recombinase XerD-like from Streptococcus pneumoniae (strain Hungary19A-6).